The following is a 177-amino-acid chain: UPF0102 protein BPP4042 (177 aa).

Positions 13–43 (AAQAQRRLHRRPPASPRASPGARDGGSPTQR) are disordered.

This sequence belongs to the UPF0102 family.

The chain is UPF0102 protein BPP4042 from Bordetella parapertussis (strain 12822 / ATCC BAA-587 / NCTC 13253).